A 314-amino-acid polypeptide reads, in one-letter code: Three-prime repair exonuclease 1 (314 aa).

Mg(2+) is bound by residues Asp18 and Glu20. Residue 20–21 (EA) participates in substrate binding. Ser78 carries the post-translational modification Phosphoserine. Tyr129 serves as a coordination point for substrate. Ser167 is modified (phosphoserine). The Proton donor/acceptor role is filled by His195. Mg(2+) is bound at residue Asp200. A substrate-binding site is contributed by Asp200. Residues 236-314 (TASARTKPRP…YGLSLATPGE (79 aa)) are necessary for endoplasmic reticulum localization. Positions 240-278 (RTKPRPSAVTTTAHLATTRNTSPSLGESRGTKDLPPVKD) are disordered. The interval 243–314 (PRPSAVTTTA…YGLSLATPGE (72 aa)) is interaction with UBQLN1. Residues 247 to 260 (AVTTTAHLATTRNT) are compositionally biased toward low complexity. The residue at position 261 (Ser261) is a Phosphoserine. The tract at residues 281–314 (ALSREGLLAPLGLLAILTLAVATLYGLSLATPGE) is necessary for cytoplasmic retention.

The protein belongs to the exonuclease superfamily. TREX family. In terms of assembly, homodimer. Interacts (via proline-rich region) with TCERG1/CA150 (via the second WW domain). Component of the SET complex, composed of at least ANP32A, APEX1, HMGB2, NME1, SET and TREX1. Within this complex, directly interacts with SET; this interaction does not result in TREX1 inhibition. Also interacts with NME1, but only following translocation to the nucleus. Directly interacts with UBQLN1 (via ubiquitin-like domain); the interaction may control TREX1 subcellular location. The cofactor is Mg(2+). Ubiquitinated, but not targeted to proteasomal degradation. Ubiquitination may be important for interaction with UBQLN1. As to expression, detected in thymus, spleen, liver, brain, heart, small intestine and colon.

It is found in the nucleus. It localises to the cytoplasm. Its subcellular location is the cytosol. The protein localises to the endoplasmic reticulum membrane. The enzyme catalyses Exonucleolytic cleavage in the 3'- to 5'-direction to yield nucleoside 5'-phosphates.. Major cellular 3'-to-5' DNA exonuclease which digests single-stranded DNA (ssDNA) and double-stranded DNA (dsDNA) with mismatched 3' termini. Prevents cell-intrinsic initiation of autoimmunity. Acts by metabolizing DNA fragments from endogenous retroelements, including L1, LTR and SINE elements. Plays a key role in degradation of DNA fragments at cytosolic micronuclei arising from genome instability: its association with the endoplasmic reticulum membrane directs TREX1 to ruptured micronuclei, leading to micronuclear DNA degradation. Micronuclear DNA degradation is required to limit CGAS activation and subsequent inflammation. Unless degraded, these DNA fragments accumulate in the cytosol and activate the cGAS-STING innate immune signaling, leading to the production of type I interferon. Prevents chronic ATM-dependent checkpoint activation, by processing ssDNA polynucleotide species arising from the processing of aberrant DNA replication intermediates. Inefficiently degrades oxidized DNA, such as that generated upon antimicrobial reactive oxygen production or upon absorption of UV light. During GZMA-mediated cell death, contributes to DNA damage in concert with NME1. NME1 nicks one strand of DNA and TREX1 removes bases from the free 3' end to enhance DNA damage and prevent DNA end reannealing and rapid repair. The protein is Three-prime repair exonuclease 1 of Homo sapiens (Human).